Here is a 293-residue protein sequence, read N- to C-terminus: Lysosomal amino acid transporter 1 homolog (293 aa).

Residues 1–37 are Lumenal-facing; it reads MVWRTLVASNFSTCPNGSIQWIWDVFGECAQDGWDEA. Asn-10 is a glycosylation site (N-linked (GlcNAc...) asparagine). A PQ-loop 1 domain is found at 34–100; sequence WDEASVALGL…LADQLPLQTY (67 aa). The helical transmembrane segment at 38–58 threads the bilayer; that stretch reads SVALGLVSIFCFAASTFPQYI. The Cytoplasmic segment spans residues 59–71; that stretch reads KACKTGNMDQALS. The helical transmembrane segment at 72 to 92 threads the bilayer; sequence LWFLLGWIGGDSCNLIGSFLA. The Lumenal segment spans residues 93–96; it reads DQLP. Residues 97-117 form a helical membrane-spanning segment; sequence LQTYTAVYYVLADLLMLTLYF. Topologically, residues 118–126 are cytoplasmic; the sequence is HYKFKKQPS. A helical transmembrane segment spans residues 127–147; sequence LLSAPINSVLLFILGTVCITP. The Lumenal portion of the chain corresponds to 148 to 182; it reads LLSSTDPVAVPREGFRGRTLLSVEPGNKPFTKKEV. A helical transmembrane segment spans residues 183-203; the sequence is VGFVIGSASSVLYLLSRLPQI. The 53-residue stretch at 191–243 folds into the PQ-loop 2 domain; that stretch reads SSVLYLLSRLPQIRTNFVRQSTQGISYSLFALVMLGNTLYGLSVLLKNPEVGQ. Residues 204-214 lie on the Cytoplasmic side of the membrane; sequence RTNFVRQSTQG. A helical membrane pass occupies residues 215–235; the sequence is ISYSLFALVMLGNTLYGLSVL. Residues 236–254 lie on the Lumenal side of the membrane; sequence LKNPEVGQSEGSYLLHHLP. Residues 255–275 traverse the membrane as a helical segment; that stretch reads WLVGSLGVLLLDTIISIQFLV. Residues 276–293 lie on the Cytoplasmic side of the membrane; the sequence is YRSHDADAASEREPLLPS. A Di-leucine motif motif is present at residues 290 to 291; the sequence is LL.

It belongs to the laat-1 family.

The protein localises to the lysosome membrane. Functionally, amino acid transporter that specifically mediates the pH-dependent export of the cationic amino acids arginine, histidine and lysine from lysosomes. The chain is Lysosomal amino acid transporter 1 homolog (Slc66a1) from Rattus norvegicus (Rat).